A 995-amino-acid chain; its full sequence is Autophagy-related protein 9 (995 aa).

Polar residues predominate over residues 1–11; it reads MPTHNSHSQPS. A disordered region spans residues 1–208; that stretch reads MPTHNSHSQP…EEEPPESDAL (208 aa). Residues 1–255 lie on the Cytoplasmic side of the membrane; the sequence is MPTHNSHSQP…KGIYCIVLAR (255 aa). A compositionally biased stretch (low complexity) spans 69–91; sequence REPSTSRSPSHSRSRSTSPANSP. 2 stretches are compositionally biased toward polar residues: residues 92 to 106 and 137 to 147; these read GHST…SGVT and TALSRQTSKSP. Residues 179–191 are compositionally biased toward basic residues; that stretch reads ERTRRKGGHKYHS. A helical transmembrane segment spans residues 256–276; that stretch reads VLNLLTTFFVIAFSTFLISCI. At 277 to 311 the chain is on the lumenal side; sequence DYSKLFSSISTAEAVGRLEDVLVAQCITKGSFAHT. Residues 312–332 traverse the membrane as a helical segment; sequence LFLIILSAFFIFQVASFAMSV. At 333-516 the chain is on the cytoplasmic side; sequence PRLLDMYRFY…KDLVQGLRRR (184 aa). An intramembrane segment occupies 517–537; sequence FIFMGILNAIFAPFIILYLLI. The Cytoplasmic segment spans residues 538-605; that stretch reads YSFFRYFEEY…PKERTALVMR (68 aa). The helical transmembrane segment at 606–626 threads the bilayer; it reads FVAFIAGSFAAVLLVASLIDP. The Lumenal portion of the chain corresponds to 627 to 638; the sequence is DLFLHFEITPHR. Residues 639 to 659 traverse the membrane as a helical segment; it reads TVLFYLGVFGSILAISRGMVP. Residues 660 to 705 are Cytoplasmic-facing; that stretch reads QENMVFDPEASLNEVVRWTHYLPVEWRGQLHSQMVHQEFSKLFALK. The stretch at 706–726 is an intramembrane region; the sequence is IMIFFSELLSVILTPFILFFS. The Cytoplasmic segment spans residues 727–995; that stretch reads LPPCAAAIID…VGLLQQVLGR (269 aa). Disordered regions lie at residues 771-817 and 914-978; these read ETGL…DWRG and WAKS…ERER. The segment covering 783–808 has biased composition (low complexity); it reads GPAADGFAAGKPSRPTTRRTTSSSPS. Residues 949–968 are compositionally biased toward basic and acidic residues; sequence EGDKGDDSIDGWSKRVKTDG.

It belongs to the ATG9 family. In terms of assembly, homotrimer; forms a homotrimer with a central pore that forms a path between the two membrane leaflets. Post-translationally, phosphorylated by ATG1. ATG1 phosphorylation is required for preautophagosome elongation.

It is found in the preautophagosomal structure membrane. The protein resides in the cytoplasmic vesicle membrane. Its subcellular location is the golgi apparatus membrane. The protein localises to the endoplasmic reticulum membrane. It catalyses the reaction a 1,2-diacyl-sn-glycero-3-phosphocholine(in) = a 1,2-diacyl-sn-glycero-3-phosphocholine(out). It carries out the reaction a 1,2-diacyl-sn-glycero-3-phospho-L-serine(in) = a 1,2-diacyl-sn-glycero-3-phospho-L-serine(out). The catalysed reaction is a 1,2-diacyl-sn-glycero-3-phosphoethanolamine(in) = a 1,2-diacyl-sn-glycero-3-phosphoethanolamine(out). The enzyme catalyses a 1,2-diacyl-sn-glycero-3-phospho-(1D-myo-inositol-3-phosphate)(in) = a 1,2-diacyl-sn-glycero-3-phospho-(1D-myo-inositol-3-phosphate)(out). In terms of biological role, phospholipid scramblase involved in autophagy and cytoplasm to vacuole transport (Cvt) vesicle formation. Cycles between the preautophagosomal structure/phagophore assembly site (PAS) and the cytoplasmic vesicle pool and supplies membrane for the growing autophagosome. Lipid scramblase activity plays a key role in preautophagosomal structure/phagophore assembly by distributing the phospholipids that arrive through ATG2 from the cytoplasmic to the luminal leaflet of the bilayer, thereby driving autophagosomal membrane expansion. Required for mitophagy. Also involved in endoplasmic reticulum-specific autophagic process and is essential for the survival of cells subjected to severe ER stress. Different machineries are required for anterograde trafficking to the PAS during either the Cvt pathway or bulk autophagy and for retrograde trafficking. In Cryptococcus neoformans var. neoformans serotype D (strain JEC21 / ATCC MYA-565) (Filobasidiella neoformans), this protein is Autophagy-related protein 9 (ATG9).